The primary structure comprises 375 residues: Succinyl-diaminopimelate desuccinylase (375 aa).

H66 lines the Zn(2+) pocket. D68 is a catalytic residue. D99 contributes to the Zn(2+) binding site. E133 (proton acceptor) is an active-site residue. Zn(2+) is bound by residues E134, E162, and H348.

This sequence belongs to the peptidase M20A family. DapE subfamily. Homodimer. The cofactor is Zn(2+). It depends on Co(2+) as a cofactor.

The catalysed reaction is N-succinyl-(2S,6S)-2,6-diaminopimelate + H2O = (2S,6S)-2,6-diaminopimelate + succinate. The protein operates within amino-acid biosynthesis; L-lysine biosynthesis via DAP pathway; LL-2,6-diaminopimelate from (S)-tetrahydrodipicolinate (succinylase route): step 3/3. In terms of biological role, catalyzes the hydrolysis of N-succinyl-L,L-diaminopimelic acid (SDAP), forming succinate and LL-2,6-diaminopimelate (DAP), an intermediate involved in the bacterial biosynthesis of lysine and meso-diaminopimelic acid, an essential component of bacterial cell walls. The chain is Succinyl-diaminopimelate desuccinylase from Stenotrophomonas maltophilia (strain R551-3).